A 378-amino-acid polypeptide reads, in one-letter code: Acetylornithine deacetylase (378 aa).

H76 lines the Zn(2+) pocket. Residue D78 is part of the active site. D108 serves as a coordination point for Zn(2+). E140 is an active-site residue. Zn(2+) is bound by residues E141, E165, and H351.

This sequence belongs to the peptidase M20A family. ArgE subfamily. In terms of assembly, homodimer. The cofactor is Zn(2+). Co(2+) is required as a cofactor. It depends on glutathione as a cofactor.

The protein resides in the cytoplasm. The catalysed reaction is N(2)-acetyl-L-ornithine + H2O = L-ornithine + acetate. Its pathway is amino-acid biosynthesis; L-arginine biosynthesis; L-ornithine from N(2)-acetyl-L-ornithine (linear): step 1/1. Catalyzes the hydrolysis of the amide bond of N(2)-acetylated L-amino acids. Cleaves the acetyl group from N-acetyl-L-ornithine to form L-ornithine, an intermediate in L-arginine biosynthesis pathway, and a branchpoint in the synthesis of polyamines. The chain is Acetylornithine deacetylase from Aliivibrio fischeri (strain ATCC 700601 / ES114) (Vibrio fischeri).